The chain runs to 259 residues: MSMPFGYVSPEQQMRDKADYARKGIARGRSVVVLQYEHGILFVAPNPSRALHKISEIYDRIGFAAVGRYNEFEALRLGGIRYADINGYNYARDDVTARGLANLYAQNLGQIFTESMKPFEVEIVVAEVGDSSDEDHIYRLTFDGSVFDETGLVAMGGQAEAVAGRLKERYRDGLPLAEALEAALFALTEPGGERSPASQLEVAVLDRNRPHRKFLRLAGPRLERLLAEGSATSATSATPGEAEAPATAPEGDVDTGSNG.

Residues 226 to 259 (LAEGSATSATSATPGEAEAPATAPEGDVDTGSNG) are disordered. The segment covering 227-250 (AEGSATSATSATPGEAEAPATAPE) has biased composition (low complexity).

The protein belongs to the peptidase T1A family. In terms of assembly, the 20S proteasome core is composed of 14 alpha and 14 beta subunits that assemble into four stacked heptameric rings, resulting in a barrel-shaped structure. The two inner rings, each composed of seven catalytic beta subunits, are sandwiched by two outer rings, each composed of seven alpha subunits. The catalytic chamber with the active sites is on the inside of the barrel. Has a gated structure, the ends of the cylinder being occluded by the N-termini of the alpha-subunits. Is capped by the proteasome-associated ATPase, ARC.

It localises to the cytoplasm. It participates in protein degradation; proteasomal Pup-dependent pathway. With respect to regulation, the formation of the proteasomal ATPase ARC-20S proteasome complex, likely via the docking of the C-termini of ARC into the intersubunit pockets in the alpha-rings, may trigger opening of the gate for substrate entry. Interconversion between the open-gate and close-gate conformations leads to a dynamic regulation of the 20S proteasome proteolysis activity. Component of the proteasome core, a large protease complex with broad specificity involved in protein degradation. The polypeptide is Proteasome subunit alpha (Streptosporangium roseum (strain ATCC 12428 / DSM 43021 / JCM 3005 / KCTC 9067 / NCIMB 10171 / NRRL 2505 / NI 9100)).